The following is a 178-amino-acid chain: Fatty-acid and retinol-binding protein 1 (178 aa).

The signal sequence occupies residues 1–16 (MYHRLILLALIGTTMA). Coiled-coil stretches lie at residues 67 to 89 (DAALEALKAKSDNLYKNAVELRN) and 130 to 153 (KQAARDIIAKYQALSEETKEELKV).

This sequence belongs to the fatty-acid and retinol-binding protein (FARBP) family. Post-translationally, not glycosylated.

Its subcellular location is the secreted. In terms of biological role, binds retinol and different fatty acids. This Wuchereria bancrofti protein is Fatty-acid and retinol-binding protein 1.